The chain runs to 251 residues: Hydroxyacylglutathione hydrolase (251 aa).

The Zn(2+) site is built by H53, H55, D57, H58, H110, D127, and H165.

Belongs to the metallo-beta-lactamase superfamily. Glyoxalase II family. As to quaternary structure, monomer. The cofactor is Zn(2+).

It carries out the reaction an S-(2-hydroxyacyl)glutathione + H2O = a 2-hydroxy carboxylate + glutathione + H(+). It functions in the pathway secondary metabolite metabolism; methylglyoxal degradation; (R)-lactate from methylglyoxal: step 2/2. Thiolesterase that catalyzes the hydrolysis of S-D-lactoyl-glutathione to form glutathione and D-lactic acid. The sequence is that of Hydroxyacylglutathione hydrolase from Klebsiella pneumoniae subsp. pneumoniae (strain ATCC 700721 / MGH 78578).